The following is a 540-amino-acid chain: MAHKELKFNTEARQALERGVNKLADAVKVTLGPKGQYVVLDKKFGSPTITNDGVTIAREIELEDIFENQGAQLLKEVATKTNDVAGDGTTTATVLAQIIVREGLKNVAAGANPVILRNGIEKAVEKAVEAIREQAKEISGKDEIARVGAISARSEEVGNVIAEAIDKVGKDGVVNVEEGQTLGIDLEFTEGMQFDKGYLSPYFVTDQDRMEAVLEDPYILIANQKISNVQDLLPLLNQVMQANKPLLIIAEDVEGEALATLIVNKLRGTFQSCAVKAPGFGDRRKRMMEDIAILTGGEVITEELGLKLENTQLSQLGRARKVVVTKDDTTIVDGAGDPEQIKGRINQIKAELETTDSDFDREKLQERLAKLAGGVAVIKVGAATETELKEKKHRVEDALSATRAALEEGIVPGGGVALLKAQKAVGELLDELDGDERTGARIVYRALEEPIRQIAENAGADGSIVVDKVRAQGDSIGFNALTGGYEDLVAAGVIDPAMVTRSALQNAASIAGLLVTTDVVVAEPEEEQPAMPGGGMGGMM.

ATP contacts are provided by residues 30-33, 87-91, glycine 414, 479-481, and aspartate 495; these read TLGP, DGTTT, and NAL.

Belongs to the chaperonin (HSP60) family. Forms a cylinder of 14 subunits composed of two heptameric rings stacked back-to-back. Interacts with the co-chaperonin GroES.

The protein localises to the cytoplasm. It carries out the reaction ATP + H2O + a folded polypeptide = ADP + phosphate + an unfolded polypeptide.. Its function is as follows. Together with its co-chaperonin GroES, plays an essential role in assisting protein folding. The GroEL-GroES system forms a nano-cage that allows encapsulation of the non-native substrate proteins and provides a physical environment optimized to promote and accelerate protein folding. This Rubrobacter xylanophilus (strain DSM 9941 / JCM 11954 / NBRC 16129 / PRD-1) protein is Chaperonin GroEL.